The following is a 309-amino-acid chain: Ferrochelatase (309 aa).

Positions 187 and 265 each coordinate Fe cation.

This sequence belongs to the ferrochelatase family.

Its subcellular location is the cytoplasm. It catalyses the reaction heme b + 2 H(+) = protoporphyrin IX + Fe(2+). It participates in porphyrin-containing compound metabolism; protoheme biosynthesis; protoheme from protoporphyrin-IX: step 1/1. Catalyzes the ferrous insertion into protoporphyrin IX. The protein is Ferrochelatase of Nitratiruptor sp. (strain SB155-2).